We begin with the raw amino-acid sequence, 174 residues long: Large ribosomal subunit protein uL6 (174 aa).

This sequence belongs to the universal ribosomal protein uL6 family. As to quaternary structure, part of the 50S ribosomal subunit.

Its function is as follows. This protein binds to the 23S rRNA, and is important in its secondary structure. It is located near the subunit interface in the base of the L7/L12 stalk, and near the tRNA binding site of the peptidyltransferase center. The polypeptide is Large ribosomal subunit protein uL6 (Stenotrophomonas maltophilia (strain R551-3)).